We begin with the raw amino-acid sequence, 86 residues long: Large ribosomal subunit protein bL27 (86 aa).

The disordered stretch occupies residues 1-22 (MAHKKAGGSTRNGRDSESKRLG).

This sequence belongs to the bacterial ribosomal protein bL27 family.

The protein is Large ribosomal subunit protein bL27 of Vibrio cholerae serotype O1 (strain ATCC 39315 / El Tor Inaba N16961).